Reading from the N-terminus, the 228-residue chain is Uracil-DNA glycosylase (228 aa).

The active-site Proton acceptor is the aspartate 64.

It belongs to the uracil-DNA glycosylase (UDG) superfamily. UNG family.

It localises to the cytoplasm. The enzyme catalyses Hydrolyzes single-stranded DNA or mismatched double-stranded DNA and polynucleotides, releasing free uracil.. Its function is as follows. Excises uracil residues from the DNA which can arise as a result of misincorporation of dUMP residues by DNA polymerase or due to deamination of cytosine. The sequence is that of Uracil-DNA glycosylase from Yersinia pestis bv. Antiqua (strain Antiqua).